Here is a 205-residue protein sequence, read N- to C-terminus: uncharacterized protein (205 aa).

Residues 1-25 show a composition bias toward polar residues; the sequence is MSNNNNEAQQPVESTNVESQQNVVQ. The disordered stretch occupies residues 1–205; it reads MSNNNNEAQQ…TSDPAQQVEA (205 aa). A compositionally biased stretch (low complexity) spans 32 to 79; sequence NENNDNNNNNNNNNNNNNNNNNNNNNNNNSNNNNNSSNNENNENNENN. Over residues 80–122 the composition is skewed to basic and acidic residues; it reads SCEKSEQEKPKEPEEPVQEEKSKEPCDQQKVKENEPAEEKETE. Composition is skewed to low complexity over residues 123–132 and 146–162; these read PAAPVEPENP and QHQQ…NGES. Residues 170–185 show a composition bias toward basic and acidic residues; the sequence is SENKKRSIDEAGDIKD. Over residues 194 to 205 the composition is skewed to polar residues; sequence VETSDPAQQVEA.

This is an uncharacterized protein from Dictyostelium discoideum (Social amoeba).